An 82-amino-acid polypeptide reads, in one-letter code: Cytochrome b559 subunit alpha (82 aa).

The helical transmembrane segment at 22-36 (IIHAVTLPAIFIAGF) threads the bilayer. His24 serves as a coordination point for heme.

It belongs to the PsbE/PsbF family. In terms of assembly, heterodimer of an alpha subunit and a beta subunit. PSII is composed of 1 copy each of membrane proteins PsbA, PsbB, PsbC, PsbD, PsbE, PsbF, PsbH, PsbI, PsbJ, PsbK, PsbL, PsbM, PsbT, PsbX, PsbY, Psb30/Ycf12, peripheral proteins PsbO, CyanoQ (PsbQ), PsbU, PsbV and a large number of cofactors. It forms dimeric complexes. It depends on heme b as a cofactor.

It localises to the cellular thylakoid membrane. In terms of biological role, this b-type cytochrome is tightly associated with the reaction center of photosystem II (PSII). PSII is a light-driven water:plastoquinone oxidoreductase that uses light energy to abstract electrons from H(2)O, generating O(2) and a proton gradient subsequently used for ATP formation. It consists of a core antenna complex that captures photons, and an electron transfer chain that converts photonic excitation into a charge separation. This is Cytochrome b559 subunit alpha from Prochlorococcus marinus (strain MIT 9515).